The following is a 334-amino-acid chain: Siroheme decarboxylase (334 aa).

Residue H93 is part of the active site.

It belongs to the Ahb/Nir family.

It carries out the reaction siroheme + 2 H(+) = 12,18-didecarboxysiroheme + 2 CO2. It participates in porphyrin-containing compound metabolism. Involved in heme d1 biosynthesis. Catalyzes the decarboxylation of siroheme into didecarboxysiroheme. Siroheme is probably decarboxylated to monodecarboxysiroheme, which is in turn decarboxylated to didecarboxysiroheme. The sequence is that of Siroheme decarboxylase from Hydrogenobacter thermophilus (strain DSM 6534 / IAM 12695 / TK-6).